Reading from the N-terminus, the 303-residue chain is GTPase Era (303 aa).

Residues 8–176 form the Era-type G domain; sequence YCGFIAIVGR…ASIVRKHMPE (169 aa). Residues 16–23 are G1; that stretch reads GRPNVGKS. 16–23 contacts GTP; it reads GRPNVGKS. The tract at residues 42–46 is G2; the sequence is QTTRH. The tract at residues 63–66 is G3; it reads DTPG. Residues 63 to 67 and 125 to 128 contribute to the GTP site; these read DTPGL and NKVD. The tract at residues 125–128 is G4; that stretch reads NKVD. A G5 region spans residues 155 to 157; sequence ISA. One can recognise a KH type-2 domain in the interval 207-284; the sequence is LGEELPYSVT…HLELWVKVKS (78 aa).

Belongs to the TRAFAC class TrmE-Era-EngA-EngB-Septin-like GTPase superfamily. Era GTPase family. Monomer.

Its subcellular location is the cytoplasm. The protein resides in the cell inner membrane. An essential GTPase that binds both GDP and GTP, with rapid nucleotide exchange. Plays a role in 16S rRNA processing and 30S ribosomal subunit biogenesis and possibly also in cell cycle regulation and energy metabolism. The polypeptide is GTPase Era (Yersinia enterocolitica serotype O:8 / biotype 1B (strain NCTC 13174 / 8081)).